A 182-amino-acid polypeptide reads, in one-letter code: Troponin I, fast skeletal muscle (182 aa).

Gly2 is modified (N-acetylglycine). The involved in binding TNC stretch occupies residues 2–48 (GDEEKRNRAITARRQHLKSVMLQIAATELEKEESRREAEKQNYLAEH). Thr12 is subject to Phosphothreonine. The tract at residues 97–117 (NQKLFDLRGKFKRPPLRRVRM) is involved in binding TNC and actin. Ser118 is modified (phosphoserine).

This sequence belongs to the troponin I family. As to quaternary structure, binds to actin and tropomyosin.

Troponin I is the inhibitory subunit of troponin, the thin filament regulatory complex which confers calcium-sensitivity to striated muscle actomyosin ATPase activity. This is Troponin I, fast skeletal muscle (TNNI2) from Homo sapiens (Human).